The following is a 434-amino-acid chain: Protein HEAT INTOLERANT 4 (434 aa).

Residues 1–8 (MKKGAKRK) carry the Nuclear localization signal 1 motif. Over residues 1 to 15 (MKKGAKRKGVSKAGR) the composition is skewed to basic residues. Residues 1–131 (MKKGAKRKGV…PVPKAKKPRA (131 aa)) are disordered. Basic and acidic residues predominate over residues 30 to 53 (ETTKTTQEESQQHEEEVVDEVKEN). Residues 54–82 (GEEEEAKGDQEEEEDAKPDSLEEDEENQE) show a composition bias toward acidic residues. The segment covering 83–98 (DEVKAEEVKEEVEKKP) has biased composition (basic and acidic residues). The Nuclear localization signal 2 motif lies at 95–102 (EKKPVARR). The segment covering 99–110 (VARRGGKRKRAT) has biased composition (basic residues). Positions 111 to 122 (KKDTEIKDEKKP) are enriched in basic and acidic residues. Positions 363–394 (VKEQVRAAKKANREAKDARKKAIEEMSEDTKQ) form a coiled coil. Positions 370–377 (AKKANREA) match the Nuclear localization signal 3 motif.

The protein localises to the nucleus. It is found in the nucleolus. In terms of biological role, essential protein required for basal thermotolerance, especially during heat-induced chromocentre decondensation, thus regulating transcriptional gene silencing (TGS). The polypeptide is Protein HEAT INTOLERANT 4 (Arabidopsis thaliana (Mouse-ear cress)).